Here is a 2136-residue protein sequence, read N- to C-terminus: U5 small nuclear ribonucleoprotein 200 kDa helicase (2136 aa).

Phosphoserine occurs at positions 17 and 26. The segment at 39 to 81 (EVLSLVGKLEGTRMGDKAQRTKPQMQEERRAKRRKRDEDRHDM) is disordered. Residue K46 forms a Glycyl lysine isopeptide (Lys-Gly) (interchain with G-Cter in SUMO2) linkage. A compositionally biased stretch (basic and acidic residues) spans 48-81 (EGTRMGDKAQRTKPQMQEERRAKRRKRDEDRHDM). Residues 54-84 (DKAQRTKPQMQEERRAKRRKRDEDRHDMNKM) adopt a coiled-coil conformation. Phosphoserine is present on S225. Position 389 is a phosphothreonine (T389). Positions 395-2129 (DLDQGGEALA…YKFSVDVKEA (1735 aa)) are interaction with C9orf78 and WBP4. Positions 490–673 (RAALETDENL…FLRVDPAKGL (184 aa)) constitute a Helicase ATP-binding 1 domain. 503–510 (APTGAGKT) is a binding site for ATP. Residues 615-618 (DEIH) carry the DEAH box motif. The Helicase C-terminal 1 domain maps to 684–921 (PLEQTYVGIT…NAKDAVNWLG (238 aa)). Y709 is modified (phosphotyrosine). K944 participates in a covalent cross-link: Glycyl lysine isopeptide (Lys-Gly) (interchain with G-Cter in SUMO). The residue at position 971 (K971) is an N6-acetyllysine; alternate. K971 participates in a covalent cross-link: Glycyl lysine isopeptide (Lys-Gly) (interchain with G-Cter in SUMO); alternate. Residues 982–1286 (TELGRIASHY…SCETQLPVSF (305 aa)) form the SEC63 1 domain. Residues K1071 and K1199 each participate in a glycyl lysine isopeptide (Lys-Gly) (interchain with G-Cter in SUMO) cross-link. The segment at 1282–2136 (LPVSFRHLIL…KEAETDSDSD (855 aa)) is interaction with TSSC4. Residues 1337–1512 (NTVYNSDDNV…WLGCSATSTF (176 aa)) enclose the Helicase ATP-binding 2 domain. 1350 to 1357 (APTGSGKT) is a binding site for ATP. The residue at position 1428 (T1428) is a Phosphothreonine. Positions 1454–1457 (DEVH) match the DEAH box motif. The 209-residue stretch at 1545–1753 (PVYHAITKHS…TIENKQDAVD (209 aa)) folds into the Helicase C-terminal 2 domain. T1765 bears the Phosphothreonine mark. Positions 1812-2124 (PLNLGMIAAY…GCDQEYKFSV (313 aa)) constitute an SEC63 2 domain. Phosphoserine is present on S2002. K2091 participates in a covalent cross-link: Glycyl lysine isopeptide (Lys-Gly) (interchain with G-Cter in SUMO). Residue T2131 is modified to Phosphothreonine. Residues S2133 and S2135 each carry the phosphoserine modification.

This sequence belongs to the helicase family. SKI2 subfamily. As to quaternary structure, component of a core complex containing at least PRPF8, SNRNP200, EFTUD2 and SNRNP40. Component of the U5 snRNP and U4/U6-U5 tri-snRNP complexes, building blocks of the spliceosome. Component of the U4/U6-U5 tri-snRNP complex composed of the U4, U6 and U5 snRNAs and at least PRPF3, PRPF4, PRPF6, PRPF8, PRPF31, SNRNP200, TXNL4A, SNRNP40, DDX23, CD2BP2, PPIH, SNU13, EFTUD2, SART1 and USP39. Component of precatalytic, catalytic and postcatalytic spliceosomal complexes. Component of the minor spliceosome, which splices U12-type introns. Interacts with C9orf78; the interaction is direct and mutually exclusive with its interaction with WBP4. Interacts with WBP4; the interaction is mutually exclusive with its interaction with C9orf78. Interacts with PRPF8. Interacts with TSSC4; the interaction is direct, excludes recruitment of C9ORF78 and WBP4 to SNRNP200 and negatively regulates its RNA helicase activity.

It localises to the nucleus. It carries out the reaction ATP + H2O = ADP + phosphate + H(+). In terms of biological role, catalyzes the ATP-dependent unwinding of U4/U6 RNA duplices, an essential step in the assembly of a catalytically active spliceosome. Plays a role in pre-mRNA splicing as core component of precatalytic, catalytic and postcatalytic spliceosomal complexes. As a component of the minor spliceosome, involved in the splicing of U12-type introns in pre-mRNAs. Involved in spliceosome assembly, activation and disassembly. Mediates changes in the dynamic network of RNA-RNA interactions in the spliceosome. This chain is U5 small nuclear ribonucleoprotein 200 kDa helicase (Snrnp200), found in Mus musculus (Mouse).